A 267-amino-acid polypeptide reads, in one-letter code: Glucosamine-6-phosphate deaminase (267 aa).

D76 (proton acceptor; for enolization step) is an active-site residue. D145 functions as the For ring-opening step in the catalytic mechanism. The active-site Proton acceptor; for ring-opening step is H147. E152 serves as the catalytic For ring-opening step.

The protein belongs to the glucosamine/galactosamine-6-phosphate isomerase family. Homohexamer.

It localises to the cytoplasm. The enzyme catalyses alpha-D-glucosamine 6-phosphate + H2O = beta-D-fructose 6-phosphate + NH4(+). It participates in nucleotide-sugar biosynthesis; UDP-N-acetyl-alpha-D-glucosamine biosynthesis; alpha-D-glucosamine 6-phosphate from D-fructose 6-phosphate: step 1/1. In terms of biological role, catalyzes the reversible conversion of alpha-D-glucosamine 6-phosphate (GlcN-6P) into beta-D-fructose 6-phosphate (Fru-6P) and ammonium ion, a regulatory reaction step in de novo uridine diphosphate-N-acetyl-alpha-D-glucosamine (UDP-GlcNAc) biosynthesis via hexosamine pathway. The chain is Glucosamine-6-phosphate deaminase from Dictyostelium discoideum (Social amoeba).